A 161-amino-acid chain; its full sequence is Large ribosomal subunit protein uL16 (161 aa).

Residues 140–161 (LNKGNYKPAKTPVTADDSESSS) are disordered.

It belongs to the universal ribosomal protein uL16 family. As to quaternary structure, part of the 50S ribosomal subunit.

Functionally, binds 23S rRNA and is also seen to make contacts with the A and possibly P site tRNAs. The sequence is that of Large ribosomal subunit protein uL16 from Prochlorococcus marinus (strain NATL1A).